The sequence spans 239 residues: MPDNLYATNMSLDLSITGHSTALPQRKSRSTYRFKAANSYVDESLFGSSGVRVDQTLQWNTAPPSQTPLLWSPGEIKENKKTSSCRPKSTPAGTPRKKIQYRVKSRTPSYCDESLFGGKVEECTWDAPWVKKEDTVKIRPLLWSPSPRLVQQSSMQNAKQGPLRAVHPPETSDSPLGTHKGLGAFWKPPESDSDYSPSPFSARQRQSTPGRETVRSASCSGRVTARRGSVKMQERPPWK.

The Nuclear export signal motif lies at 12–24 (LDLSITGHSTALP). Disordered regions lie at residues 62 to 97 (APPS…TPRK) and 149 to 239 (LVQQ…PPWK). A Nuclear localization signal motif is present at residues 93-109 (GTPRKKIQYRVKSRTPS). The segment at 129–158 (WVKKEDTVKIRPLLWSPSPRLVQQSSMQNA) is interaction with RBPJ/RBPSUH. Polar residues-rich tracts occupy residues 149–159 (LVQQSSMQNAK) and 203–221 (RQRQ…SCSG). The tract at residues 158–239 (AKQGPLRAVH…VKMQERPPWK (82 aa)) is interaction with tubulin.

This sequence belongs to the RITA family. In terms of assembly, interacts with rbpj/rbpsuh.

The protein resides in the cytoplasm. Its subcellular location is the nucleus. Tubulin-binding protein that acts as a negative regulator of Notch signaling pathway. Shuttles between the cytoplasm and the nucleus and mediates the nuclear export of rbpj/rbpsuh, thereby preventing the interaction between rbpj/rbpsuh and NICD product of Notch proteins (Notch intracellular domain), leading to down-regulate Notch-mediated transcription. May play a role in neurogenesis. The protein is RBPJ-interacting and tubulin-associated protein 1 (rita1) of Xenopus laevis (African clawed frog).